The following is a 149-amino-acid chain: Large ribosomal subunit protein bL9 (149 aa).

Lysine 89 carries the N6-acetyllysine modification.

This sequence belongs to the bacterial ribosomal protein bL9 family.

Its function is as follows. Binds to the 23S rRNA. The chain is Large ribosomal subunit protein bL9 from Shigella dysenteriae serotype 1 (strain Sd197).